A 588-amino-acid chain; its full sequence is Aspartate--tRNA(Asp/Asn) ligase (588 aa).

Glu172 serves as a coordination point for L-aspartate. Positions 196 to 199 are aspartate; the sequence is QLFK. Position 218 (Arg218) interacts with L-aspartate. Residues 218 to 220 and Gln227 contribute to the ATP site; that span reads RDE. His450 contributes to the L-aspartate binding site. Residue Glu484 participates in ATP binding. Arg491 is an L-aspartate binding site. 536 to 539 contacts ATP; that stretch reads GLDR.

Belongs to the class-II aminoacyl-tRNA synthetase family. Type 1 subfamily. As to quaternary structure, homodimer.

It localises to the cytoplasm. The catalysed reaction is tRNA(Asx) + L-aspartate + ATP = L-aspartyl-tRNA(Asx) + AMP + diphosphate. Functionally, aspartyl-tRNA synthetase with relaxed tRNA specificity since it is able to aspartylate not only its cognate tRNA(Asp) but also tRNA(Asn). Reaction proceeds in two steps: L-aspartate is first activated by ATP to form Asp-AMP and then transferred to the acceptor end of tRNA(Asp/Asn). The polypeptide is Aspartate--tRNA(Asp/Asn) ligase (Nitrosospira multiformis (strain ATCC 25196 / NCIMB 11849 / C 71)).